A 475-amino-acid polypeptide reads, in one-letter code: Ankyrin repeat, SAM and basic leucine zipper domain-containing protein 1 (475 aa).

Positions 1–25 (MAAGTLRGLAVAGGGESSDSEDDGW) are disordered. Ser-17, Ser-18, and Ser-20 each carry phosphoserine. 6 ANK repeats span residues 45–74 (EKNETFKKALTTGDISLVKELLDSGINVDS), 78–107 (YGWTPLMYAASVANAELVRFLLDRGANASF), 110–144 (DKLTILISACSARGSEEQVLKCVELLLSRNADPNT), 148–177 (RLMTPIMYAARDGHTQVVALLVAHGAEVNA), 181–210 (NGYTALTWAARQGHKNVILKLLELGANKML), and 214–243 (DGRTPSEIAKRNKHLEIFNFLSLTLNPLEG). Residues 272 to 334 (PYTAFGDLEI…KILAALKELE (63 aa)) enclose the SAM domain.

As to quaternary structure, interacts with DDX4, PIWIL1, RANBP9 and TDRD1. As to expression, expressed exclusively in testis and ovary with higher levels in testis.

It localises to the cytoplasm. Its function is as follows. Plays a central role during spermatogenesis by repressing transposable elements and preventing their mobilization, which is essential for the germline integrity. Acts via the piRNA metabolic process, which mediates the repression of transposable elements during meiosis by forming complexes composed of piRNAs and Piwi proteins and governs the methylation and subsequent repression of transposons. Its association with pi-bodies suggests a participation in the primary piRNAs metabolic process. Required prior to the pachytene stage to facilitate the production of multiple types of piRNAs, including those associated with repeats involved in regulation of retrotransposons. May act by mediating protein-protein interactions during germ cell maturation. This is Ankyrin repeat, SAM and basic leucine zipper domain-containing protein 1 from Mus musculus (Mouse).